A 322-amino-acid chain; its full sequence is Tetraacyldisaccharide 4'-kinase (322 aa).

Ser54–Thr61 lines the ATP pocket.

The protein belongs to the LpxK family.

The catalysed reaction is a lipid A disaccharide + ATP = a lipid IVA + ADP + H(+). Its pathway is glycolipid biosynthesis; lipid IV(A) biosynthesis; lipid IV(A) from (3R)-3-hydroxytetradecanoyl-[acyl-carrier-protein] and UDP-N-acetyl-alpha-D-glucosamine: step 6/6. Transfers the gamma-phosphate of ATP to the 4'-position of a tetraacyldisaccharide 1-phosphate intermediate (termed DS-1-P) to form tetraacyldisaccharide 1,4'-bis-phosphate (lipid IVA). In Francisella tularensis subsp. holarctica (strain FTNF002-00 / FTA), this protein is Tetraacyldisaccharide 4'-kinase.